A 103-amino-acid polypeptide reads, in one-letter code: Iron-sulfur cluster assembly protein CyaY (103 aa).

The protein belongs to the frataxin family.

Functionally, involved in iron-sulfur (Fe-S) cluster assembly. May act as a regulator of Fe-S biogenesis. The polypeptide is Iron-sulfur cluster assembly protein CyaY (Rickettsia rickettsii (strain Iowa)).